The sequence spans 447 residues: Probable tRNA methyltransferase 9B (447 aa).

The residue at position 212 (S212) is a Phosphoserine. Disordered regions lie at residues 274 to 306 (AWANSTVSQQPSRHPSLDLHAPEPFSTKGPNLD) and 320 to 348 (WLRTPGTSDNFSGHKGGGSRRKEGGNFLD). Positions 276–286 (ANSTVSQQPSR) are enriched in polar residues.

It belongs to the methyltransferase superfamily.

Its function is as follows. May modify wobble uridines in specific arginine and glutamic acid tRNAs. Acts as a tumor suppressor by promoting the expression of LIN9. This is Probable tRNA methyltransferase 9B (Trmt9b) from Mus musculus (Mouse).